The following is a 39-amino-acid chain: ILECVFSCDIKKEGKPCKPKGEKKCTGGWRCKIKLCLKI.

Cystine bridges form between cysteine 4/cysteine 25, cysteine 8/cysteine 31, and cysteine 17/cysteine 36.

Belongs to the neurotoxin 12 (Hwtx-2) family. 06 (TXP1) subfamily. In terms of tissue distribution, expressed by the venom gland.

It localises to the secreted. Functionally, inhibits voltage-gated calcium channels (Cav) in rat cerebellar granule cells. Has insecticidal activity to crickets (Acheta domesticus). Is not toxic to mice. The chain is Omega-theraphotoxin-Ba1a from Brachypelma albiceps (Mexican golden redrump tarantula).